Reading from the N-terminus, the 842-residue chain is Alanine--tRNA ligase (842 aa).

Histidine 549, histidine 553, cysteine 650, and histidine 654 together coordinate Zn(2+).

It belongs to the class-II aminoacyl-tRNA synthetase family. Requires Zn(2+) as cofactor.

The protein localises to the cytoplasm. The catalysed reaction is tRNA(Ala) + L-alanine + ATP = L-alanyl-tRNA(Ala) + AMP + diphosphate. Its function is as follows. Catalyzes the attachment of alanine to tRNA(Ala) in a two-step reaction: alanine is first activated by ATP to form Ala-AMP and then transferred to the acceptor end of tRNA(Ala). Also edits incorrectly charged Ser-tRNA(Ala) and Gly-tRNA(Ala) via its editing domain. This is Alanine--tRNA ligase from Campylobacter jejuni subsp. jejuni serotype O:2 (strain ATCC 700819 / NCTC 11168).